A 346-amino-acid polypeptide reads, in one-letter code: Ephrin-B1 (346 aa).

The first 27 residues, 1-27 (MARPGQRWLGKWLVAMVVWALCRLATP), serve as a signal peptide directing secretion. The Extracellular segment spans residues 28 to 237 (LAKNLEPVSW…GDPDGFFNSK (210 aa)). The Ephrin RBD domain maps to 30 to 164 (KNLEPVSWSS…TRTMKIIMKV (135 aa)). Cystine bridges form between Cys64–Cys101 and Cys89–Cys153. A glycan (N-linked (GlcNAc...) asparagine) is linked at Asn139. A disordered region spans residues 169-228 (NAVTPEQLTTSRPSKEADNTVKMATQAPGSRGSLGDSDGKHETVNQEEKSGPGASGGSSG). Basic and acidic residues predominate over residues 205–218 (SDGKHETVNQEEKS). Residues 238 to 258 (VALFAAVGAGCVIFLLIIIFL) traverse the membrane as a helical segment. At 259 to 346 (TVLLLKLRKR…QSPANIYYKV (88 aa)) the chain is on the cytoplasmic side. The Nuclear localization signal motif lies at 260 to 273 (VLLLKLRKRHRKHT). The segment at 263-294 (LKLRKRHRKHTQQRAAALSLSTLASPKGGSGT) is interaction with ZHX2. 2 positions are modified to phosphoserine: Ser281 and Ser287. The short motif at 344 to 346 (YKV) is the PDZ-binding element.

This sequence belongs to the ephrin family. As to quaternary structure, interacts (via PDZ-binding motif) with GRIP1 and GRIP2 (via PDZ domain 6). Interacts with TLE1. The intracellular domain peptide interacts with ZHX2; the interaction enhances ZHX2 transcriptional repression activity. Inducible phosphorylation of tyrosine residues in the cytoplasmic domain. In terms of processing, proteolytically processed. The ectodomain is cleaved, probably by a metalloprotease, to produce a membrane-tethered C-terminal fragment. This fragment is then further processed by the gamma-secretase complex to yield a soluble intracellular domain peptide which can translocate to the nucleus. The intracellular domain peptide is highly labile suggesting that it is targeted for degradation by the proteasome. Widely expressed. Detected in both neuronal and non-neuronal tissues. Seems to have particularly strong expression in retina, sciatic nerve, heart and spinal cord.

It is found in the cell membrane. The protein localises to the membrane raft. Its subcellular location is the nucleus. Its function is as follows. Cell surface transmembrane ligand for Eph receptors, a family of receptor tyrosine kinases which are crucial for migration, repulsion and adhesion during neuronal, vascular and epithelial development. Binding to Eph receptors residing on adjacent cells leads to contact-dependent bidirectional signaling into neighboring cells. Shows high affinity for the receptor tyrosine kinase EPHB1/ELK. Can also bind EPHB2 and EPHB3. Binds to, and induces collapse of, commissural axons/growth cones in vitro. May play a role in constraining the orientation of longitudinally projecting axons. The polypeptide is Ephrin-B1 (EFNB1) (Homo sapiens (Human)).